Reading from the N-terminus, the 493-residue chain is Vacuolar-processing enzyme (493 aa).

A signal peptide spans 1 to 19; sequence MGSSQLSTLLFFTIVVTFL. N147 is a glycosylation site (N-linked (GlcNAc...) asparagine). The active site involves H174. The Nucleophile role is filled by C216. C249 and C263 form a disulfide bridge. N-linked (GlcNAc...) asparagine glycosylation is found at N295 and N331. Intrachain disulfides connect C429/C459 and C441/C476.

This sequence belongs to the peptidase C13 family.

Functionally, asparagine-specific endopeptidase involved in the processing of vacuolar seed protein precursors into the mature forms. The polypeptide is Vacuolar-processing enzyme (Vicia sativa (Spring vetch)).